The chain runs to 234 residues: ATP-dependent dethiobiotin synthetase BioD (234 aa).

14-19 (GVGKTI) is a binding site for ATP. Thr-18 contributes to the Mg(2+) binding site. The active site involves Lys-39. Residue Ser-43 participates in substrate binding. Residues Asp-56, 118-121 (EGAG), 178-179 (NH), and 208-210 (PWL) each bind ATP. Mg(2+) contacts are provided by Asp-56 and Glu-118.

The protein belongs to the dethiobiotin synthetase family. As to quaternary structure, homodimer. Mg(2+) is required as a cofactor.

It is found in the cytoplasm. It carries out the reaction (7R,8S)-7,8-diammoniononanoate + CO2 + ATP = (4R,5S)-dethiobiotin + ADP + phosphate + 3 H(+). Its pathway is cofactor biosynthesis; biotin biosynthesis; biotin from 7,8-diaminononanoate: step 1/2. Its function is as follows. Catalyzes a mechanistically unusual reaction, the ATP-dependent insertion of CO2 between the N7 and N8 nitrogen atoms of 7,8-diaminopelargonic acid (DAPA, also called 7,8-diammoniononanoate) to form a ureido ring. The polypeptide is ATP-dependent dethiobiotin synthetase BioD (Marinobacter nauticus (strain ATCC 700491 / DSM 11845 / VT8) (Marinobacter aquaeolei)).